A 175-amino-acid chain; its full sequence is uncharacterized protein (175 aa).

Transmembrane regions (helical) follow at residues 25–45 (MIAIGGTIGTGLFLGAGTTIS), 46–66 (ATGPSVIFIYAIMGLFFFFLL), 97–117 (FAGWTYWIGILFACMAELTAV), 124–144 (WLPGLPAWLIEVSVLGLLTLL), and 155–175 (TEFWFAMIKIIAIISLVVTGI).

This sequence belongs to the amino acid-polyamine-organocation (APC) superfamily.

The protein resides in the cell membrane. This is an uncharacterized protein from Lactobacillus delbrueckii subsp. lactis.